The following is a 182-amino-acid chain: Isopentenyl-diphosphate Delta-isomerase (182 aa).

2 residues coordinate Mn(2+): histidine 25 and histidine 32. A Nudix hydrolase domain is found at 30 to 164 (LLHLAFSSWL…PWAFSPWMVM (135 aa)). Cysteine 67 is an active-site residue. Residue cysteine 67 coordinates Mg(2+). Residue histidine 69 participates in Mn(2+) binding. Residue glutamate 87 coordinates Mg(2+). Mn(2+) is bound by residues glutamate 114 and glutamate 116. Residue glutamate 116 is part of the active site.

The protein belongs to the IPP isomerase type 1 family. Homodimer. Mg(2+) serves as cofactor. Mn(2+) is required as a cofactor.

It is found in the cytoplasm. The catalysed reaction is isopentenyl diphosphate = dimethylallyl diphosphate. Its pathway is isoprenoid biosynthesis; dimethylallyl diphosphate biosynthesis; dimethylallyl diphosphate from isopentenyl diphosphate: step 1/1. In terms of biological role, catalyzes the 1,3-allylic rearrangement of the homoallylic substrate isopentenyl (IPP) to its highly electrophilic allylic isomer, dimethylallyl diphosphate (DMAPP). This Shigella boydii serotype 4 (strain Sb227) protein is Isopentenyl-diphosphate Delta-isomerase.